Consider the following 166-residue polypeptide: Lipoprotein signal peptidase (166 aa).

3 helical membrane-spanning segments follow: residues 12-32, 66-86, and 101-121; these read LPIALFILVALVADQAIKYLV, MEGWFIVGMRLAVVAFVLWLW, and AMIIAGALGNLVDRLLFGYVI. Residues D122 and D140 contribute to the active site. Residues 132-152 form a helical membrane-spanning segment; that stretch reads SFAVFNLADSFITVGAGAIIL.

It belongs to the peptidase A8 family.

Its subcellular location is the cell inner membrane. The enzyme catalyses Release of signal peptides from bacterial membrane prolipoproteins. Hydrolyzes -Xaa-Yaa-Zaa-|-(S,diacylglyceryl)Cys-, in which Xaa is hydrophobic (preferably Leu), and Yaa (Ala or Ser) and Zaa (Gly or Ala) have small, neutral side chains.. It participates in protein modification; lipoprotein biosynthesis (signal peptide cleavage). Functionally, this protein specifically catalyzes the removal of signal peptides from prolipoproteins. This chain is Lipoprotein signal peptidase, found in Sinorhizobium fredii (strain NBRC 101917 / NGR234).